Reading from the N-terminus, the 315-residue chain is Aspartate carbamoyltransferase catalytic subunit (315 aa).

Positions 64 and 65 each coordinate carbamoyl phosphate. An L-aspartate-binding site is contributed by Lys92. Carbamoyl phosphate is bound by residues Arg114, His142, and Gln145. L-aspartate contacts are provided by Arg175 and Arg229. Carbamoyl phosphate contacts are provided by Gly270 and Pro271.

Belongs to the aspartate/ornithine carbamoyltransferase superfamily. ATCase family. As to quaternary structure, heterododecamer (2C3:3R2) of six catalytic PyrB chains organized as two trimers (C3), and six regulatory PyrI chains organized as three dimers (R2).

It catalyses the reaction carbamoyl phosphate + L-aspartate = N-carbamoyl-L-aspartate + phosphate + H(+). It participates in pyrimidine metabolism; UMP biosynthesis via de novo pathway; (S)-dihydroorotate from bicarbonate: step 2/3. In terms of biological role, catalyzes the condensation of carbamoyl phosphate and aspartate to form carbamoyl aspartate and inorganic phosphate, the committed step in the de novo pyrimidine nucleotide biosynthesis pathway. The chain is Aspartate carbamoyltransferase catalytic subunit from Xanthobacter autotrophicus (strain ATCC BAA-1158 / Py2).